A 439-amino-acid polypeptide reads, in one-letter code: MTISKDDQARLYRYYTEPTLVTELTRKTLALVLAGGEGSRLKDLTAWRAKPAVPIGGKYRIIDFPLSNCVNSGIRRIGVLTQYKSHSLIRHLQRAWGLMRTEVGEFVEILPAQQRTHKKEWYQGTADALFQNLDIMQRHHPEYVLVLGGDHVYTMDYTQMLLYHVQTGADVTVGSVEVPVAEAAAFGVMSVDESLRITEFNEKPREPDSMPGKPGTALVSMGIYVFSKDFLYKALIEDAGATRSSHDFGKDIIPSSISRARIMAFPFRDREGKPGYWRDVGALNCYWQTNMDLCSIEPALNLYDCEWPIWTYQPQYPPAKFIFDDEGRRGEAIDSLVAGGCVLSGARVKRSVLFFATTVGCSSLVKDSVILPKVRIGRNCRISCAIIDKGTVIPDGTVIGEDPVEDAKRFHVTPEGIVLVTPRMLGQNIYARWEDEYDG.

Residues Tyr122, Gly187, 202 to 203 (EK), and Ser220 each bind alpha-D-glucose 1-phosphate.

It belongs to the bacterial/plant glucose-1-phosphate adenylyltransferase family. Homotetramer.

The catalysed reaction is alpha-D-glucose 1-phosphate + ATP + H(+) = ADP-alpha-D-glucose + diphosphate. It participates in glycan biosynthesis; glycogen biosynthesis. In terms of biological role, involved in the biosynthesis of ADP-glucose, a building block required for the elongation reactions to produce glycogen. Catalyzes the reaction between ATP and alpha-D-glucose 1-phosphate (G1P) to produce pyrophosphate and ADP-Glc. In Thiobacillus denitrificans (strain ATCC 25259 / T1), this protein is Glucose-1-phosphate adenylyltransferase.